The following is a 435-amino-acid chain: N-lysine methyltransferase SMYD2-A (435 aa).

Residues 7–241 form the SET domain; sequence EGTERFLSPG…PEEEIFNSYI (235 aa). 17-19 contacts S-adenosyl-L-methionine; it reads KGR. Zn(2+)-binding residues include Cys-52, Cys-55, Cys-65, Cys-68, Cys-74, Cys-78, His-86, and Cys-90. The MYND-type zinc-finger motif lies at 52–90; sequence CECCFTRKEGLSKCGKCKQAYYCNVECQRGDWPMHKLEC. S-adenosyl-L-methionine-binding positions include His-137, 206-207, and 258-260; these read NH and YFF.

It belongs to the class V-like SAM-binding methyltransferase superfamily.

The protein resides in the cytoplasm. It localises to the cytosol. It is found in the nucleus. It carries out the reaction L-lysyl(4)-[histone H3] + 3 S-adenosyl-L-methionine = N(6),N(6),N(6)-trimethyl-L-lysyl(4)-[histone H3] + 3 S-adenosyl-L-homocysteine + 3 H(+). The catalysed reaction is L-lysyl-[protein] + S-adenosyl-L-methionine = N(6)-methyl-L-lysyl-[protein] + S-adenosyl-L-homocysteine + H(+). Functionally, protein-lysine N-methyltransferase that methylates both histones and non-histone proteins, including p53/TP53 and RB1. Specifically trimethylates histone H3 'Lys-4' (H3K4me3) in vivo. The activity requires interaction with HSP90alpha. Shows even higher methyltransferase activity on p53/TP53. Monomethylates 'Lys-370' of p53/TP53, leading to decreased DNA-binding activity and subsequent transcriptional regulation activity of p53/TP53. Monomethylates RB1 at 'Lys-860'. This chain is N-lysine methyltransferase SMYD2-A (smyd2a), found in Danio rerio (Zebrafish).